Here is a 430-residue protein sequence, read N- to C-terminus: Phosphomethylpyrimidine synthase (430 aa).

Residues Asn67, Met96, Tyr125, His161, 183–185 (SRG), 224–227 (DALR), and Glu263 each bind substrate. Zn(2+) is bound at residue His267. Residue Tyr290 coordinates substrate. His331 is a Zn(2+) binding site. Positions 406, 409, and 413 each coordinate [4Fe-4S] cluster.

This sequence belongs to the ThiC family. Homodimer. The cofactor is [4Fe-4S] cluster.

It catalyses the reaction 5-amino-1-(5-phospho-beta-D-ribosyl)imidazole + S-adenosyl-L-methionine = 4-amino-2-methyl-5-(phosphooxymethyl)pyrimidine + CO + 5'-deoxyadenosine + formate + L-methionine + 3 H(+). Its pathway is cofactor biosynthesis; thiamine diphosphate biosynthesis. Its function is as follows. Catalyzes the synthesis of the hydroxymethylpyrimidine phosphate (HMP-P) moiety of thiamine from aminoimidazole ribotide (AIR) in a radical S-adenosyl-L-methionine (SAM)-dependent reaction. In Campylobacter jejuni subsp. jejuni serotype O:23/36 (strain 81-176), this protein is Phosphomethylpyrimidine synthase.